The following is a 57-amino-acid chain: UPF0391 membrane protein bsl5717 (57 aa).

A run of 2 helical transmembrane segments spans residues 6–26 (WALIFLLVSIVAGVLGFTGIS) and 35–55 (FLFYVFVVIFLVLLILGLTIF).

This sequence belongs to the UPF0391 family.

Its subcellular location is the cell membrane. The sequence is that of UPF0391 membrane protein bsl5717 from Bradyrhizobium diazoefficiens (strain JCM 10833 / BCRC 13528 / IAM 13628 / NBRC 14792 / USDA 110).